The primary structure comprises 228 residues: Cytidylate kinase (228 aa).

Position 17–25 (17–25 (GPTASGKGT)) interacts with ATP.

The protein belongs to the cytidylate kinase family. Type 1 subfamily.

The protein resides in the cytoplasm. The enzyme catalyses CMP + ATP = CDP + ADP. The catalysed reaction is dCMP + ATP = dCDP + ADP. The protein is Cytidylate kinase of Burkholderia ambifaria (strain MC40-6).